Here is a 306-residue protein sequence, read N- to C-terminus: UDP-N-acetylenolpyruvoylglucosamine reductase (306 aa).

Residues 34–199 (KSGGAAEWLF…VAATFRGHAE (166 aa)) form the FAD-binding PCMH-type domain. Residue R179 is part of the active site. The disordered stretch occupies residues 215 to 234 (REASQPLRSRTGGSTFKNPQ). Polar residues predominate over residues 220–232 (PLRSRTGGSTFKN). Catalysis depends on S228, which acts as the Proton donor. The active site involves E298.

The protein belongs to the MurB family. The cofactor is FAD.

The protein localises to the cytoplasm. The catalysed reaction is UDP-N-acetyl-alpha-D-muramate + NADP(+) = UDP-N-acetyl-3-O-(1-carboxyvinyl)-alpha-D-glucosamine + NADPH + H(+). Its pathway is cell wall biogenesis; peptidoglycan biosynthesis. Cell wall formation. This is UDP-N-acetylenolpyruvoylglucosamine reductase from Rhizorhabdus wittichii (strain DSM 6014 / CCUG 31198 / JCM 15750 / NBRC 105917 / EY 4224 / RW1) (Sphingomonas wittichii).